The primary structure comprises 354 residues: D-alanine--D-alanine ligase (354 aa).

The ATP-grasp domain maps to 154-348 (RSWFLTNNIN…FTNLIEEIIK (195 aa)). An ATP-binding site is contributed by 181 to 232 (MKRPYVIKPITQGSSIGIEVIFEEDDFNFANYDFPYGDQVIIEKYIKGRELQ). E301, E315, and N317 together coordinate Mg(2+).

The protein belongs to the D-alanine--D-alanine ligase family. It depends on Mg(2+) as a cofactor. Mn(2+) is required as a cofactor.

Its subcellular location is the cytoplasm. It carries out the reaction 2 D-alanine + ATP = D-alanyl-D-alanine + ADP + phosphate + H(+). It participates in cell wall biogenesis; peptidoglycan biosynthesis. In terms of biological role, cell wall formation. This is D-alanine--D-alanine ligase from Rickettsia canadensis (strain McKiel).